The chain runs to 214 residues: MRIILLGAPGAGKGTQAQFIMEKYGIPQISTGDMLRAAVKAQSELGRQAKALMDAGKLVTDELVIALAKERIKQDHCRNGFLLDGFPRTLPQADAMKEVGIAVDYVLEFAVPDSLIIDRIVGRRVHAPSGRVYHVKFNPPKQEGKDDVTGELLTSRKDDQEDTVRKRLVEYHQQTAPLIDYYRKEADAGNTRYFTLDGTRNVSEVSAELAAILG.

10–15 (GAGKGT) lines the ATP pocket. The segment at 30 to 59 (STGDMLRAAVKAQSELGRQAKALMDAGKLV) is NMP. AMP is bound by residues T31, R36, 57–59 (KLV), 85–88 (GFPR), and Q92. Residues 122–159 (GRRVHAPSGRVYHVKFNPPKQEGKDDVTGELLTSRKDD) are LID. Residues R123 and 132-133 (VY) contribute to the ATP site. Residues R156 and R167 each coordinate AMP. Position 200 (R200) interacts with ATP.

It belongs to the adenylate kinase family. Monomer.

It localises to the cytoplasm. It carries out the reaction AMP + ATP = 2 ADP. It participates in purine metabolism; AMP biosynthesis via salvage pathway; AMP from ADP: step 1/1. Functionally, catalyzes the reversible transfer of the terminal phosphate group between ATP and AMP. Plays an important role in cellular energy homeostasis and in adenine nucleotide metabolism. The chain is Adenylate kinase from Sodalis glossinidius (strain morsitans).